We begin with the raw amino-acid sequence, 106 residues long: uncharacterized protein (106 aa).

Transmembrane regions (helical) follow at residues 53-70 (LLLL…LDII) and 74-93 (ILGL…WTLI).

It localises to the cell membrane. This is an uncharacterized protein from Bacillus subtilis (strain 168).